Reading from the N-terminus, the 387-residue chain is Pepsin-3 (387 aa).

The signal sequence occupies residues Met1–Cys15. A propeptide spans Ile16 to Phe59 (activation peptide). The region spanning Tyr75 to Ala384 is the Peptidase A1 domain. Asp93 is an active-site residue. 2 disulfide bridges follow: Cys106–Cys111 and Cys267–Cys271. The active site involves Asp276. The cysteines at positions 310 and 343 are disulfide-linked.

It belongs to the peptidase A1 family.

It is found in the secreted. It carries out the reaction Preferential cleavage: hydrophobic, preferably aromatic, residues in P1 and P1' positions. Cleaves 1-Phe-|-Val-2, 4-Gln-|-His-5, 13-Glu-|-Ala-14, 14-Ala-|-Leu-15, 15-Leu-|-Tyr-16, 16-Tyr-|-Leu-17, 23-Gly-|-Phe-24, 24-Phe-|-Phe-25 and 25-Phe-|-Tyr-26 bonds in the B chain of insulin.. Functionally, shows particularly broad specificity; although bonds involving phenylalanine and leucine are preferred, many others are also cleaved to some extent. In Oryctolagus cuniculus (Rabbit), this protein is Pepsin-3.